The sequence spans 182 residues: uncharacterized protein (182 aa).

The signal sequence occupies residues 1–29 (MKKLLKKLVVLFLSSLVIIFNVWYFIICA). A helical membrane pass occupies residues 152 to 174 (WNLYFWTAASYNAVIFVFVLVIV).

Its subcellular location is the membrane. This is an uncharacterized protein from Bacillus subtilis (strain 168).